We begin with the raw amino-acid sequence, 190 residues long: Cathelicidin-3 (190 aa).

The signal sequence occupies residues 1-29; sequence METQMASPSLGRCSLWLLLLGLLLPSASA. Pyrrolidone carboxylic acid is present on Gln-30. A propeptide spanning residues 30–130 is cleaved from the precursor; that stretch reads QALSYREAVL…DLNCNELQSV (101 aa). Cystine bridges form between Cys-85–Cys-96 and Cys-107–Cys-124. Residues 133–151 show a composition bias toward basic residues; it reads LRPRRPRLPRPRPRPRPRP. The segment at 133 to 190 is disordered; it reads LRPRRPRLPRPRPRPRPRPRSLPLPRPQPRRIPRPILLPWRPPRPIPRPQPQPIPRWL. Pro residues predominate over residues 172–190; it reads WRPPRPIPRPQPQPIPRWL.

Belongs to the cathelicidin family.

The protein localises to the secreted. In terms of biological role, exerts, in vitro, a potent antimicrobial activity. Probably due to an impairment of the function of the respiratory chain and of energy-dependent activities in the inner membrane of susceptible microorganisms. The sequence is that of Cathelicidin-3 (CATHL3) from Ovis aries (Sheep).